We begin with the raw amino-acid sequence, 141 residues long: Methylglyoxal synthase (141 aa).

An MGS-like domain is found at 1 to 141 (MNIALIAHDK…PKLQKNKSDK (141 aa)). Substrate-binding positions include H8, K12, and 34 to 37 (TGTT). Catalysis depends on D60, which acts as the Proton donor/acceptor. H87 lines the substrate pocket.

Belongs to the methylglyoxal synthase family.

The catalysed reaction is dihydroxyacetone phosphate = methylglyoxal + phosphate. Catalyzes the formation of methylglyoxal from dihydroxyacetone phosphate. The sequence is that of Methylglyoxal synthase from Caldicellulosiruptor bescii (strain ATCC BAA-1888 / DSM 6725 / KCTC 15123 / Z-1320) (Anaerocellum thermophilum).